A 69-amino-acid polypeptide reads, in one-letter code: DNA-directed RNA polymerase subunit epsilon (69 aa).

Belongs to the RNA polymerase subunit epsilon family. In terms of assembly, RNAP is composed of a core of 2 alpha, a beta and a beta' subunit. The core is associated with a delta subunit, and at least one of epsilon or omega. When a sigma factor is associated with the core the holoenzyme is formed, which can initiate transcription.

The enzyme catalyses RNA(n) + a ribonucleoside 5'-triphosphate = RNA(n+1) + diphosphate. A non-essential component of RNA polymerase (RNAP). In Shouchella clausii (strain KSM-K16) (Alkalihalobacillus clausii), this protein is DNA-directed RNA polymerase subunit epsilon.